The chain runs to 607 residues: Autophagy-related protein 22-2 (607 aa).

Residues 1–29 (MTVAPPSPNSPAAELQQRPPRYPGEDTTP) are disordered. The helical transmembrane segment at 41–61 (YGIAAEVFAVCGVGSFLPLTL) threads the bilayer. The N-linked (GlcNAc...) asparagine glycan is linked to Asn89. The next 3 helical transmembrane spans lie at 119–139 (SFAM…LISF), 151–170 (TLLL…FVFI), and 188–208 (CLGS…ANDP). Residues 235–263 (SFSASDAESGPHPAAEAGSGTSSGPASPE) form a disordered region. Residues 247-263 (PAAEAGSGTSSGPASPE) show a composition bias toward low complexity. Helical transmembrane passes span 274–294 (GVGL…SLLF), 307–327 (TLPL…FTMV), 379–399 (VLVF…VSGT), and 415–435 (VGLL…LWPV). The N-linked (GlcNAc...) asparagine glycan is linked to Asn445. 4 helical membrane passes run 450-470 (LCIA…IPVF), 485-507 (FPLA…SFFG), 519-541 (YALY…GMLI), and 550-570 (GFFF…IVNA). Residues 586–607 (KGHETEMSEQTEEAEGLLARGI) form a disordered region.

This sequence belongs to the ATG22 family.

It localises to the vacuole membrane. Functionally, vacuolar effluxer which mediate the efflux of amino acids resulting from autophagic degradation. The release of autophagic amino acids allows the maintenance of protein synthesis and viability during nitrogen starvation. The chain is Autophagy-related protein 22-2 (atg22-2) from Aspergillus oryzae (strain ATCC 42149 / RIB 40) (Yellow koji mold).